Consider the following 389-residue polypeptide: Phosphatidylglycerol--prolipoprotein diacylglyceryl transferase (389 aa).

The next 4 membrane-spanning stretches (helical) occupy residues 28-48 (IIVAIGIAFGILMFVLKLIYF), 58-78 (FFIFIAVLTMVLGARAWYFLI), 98-118 (LAIQGGVLLTTLAGIIYFNVF), and 148-168 (ISVFVMLDLIAPCVLIGQAIG). Arg-169 contacts a 1,2-diacyl-sn-glycero-3-phospho-(1'-sn-glycerol). 3 helical membrane-spanning segments follow: residues 220 to 240 (IPLFLIESFFNTIFFVFIYFV), 281 to 301 (IVFSALLILVGIVGIIYCQTL), and 309 to 329 (FWTYFFLYGWYKVAAFFTTLF).

This sequence belongs to the Lgt family.

The protein localises to the cell membrane. It catalyses the reaction L-cysteinyl-[prolipoprotein] + a 1,2-diacyl-sn-glycero-3-phospho-(1'-sn-glycerol) = an S-1,2-diacyl-sn-glyceryl-L-cysteinyl-[prolipoprotein] + sn-glycerol 1-phosphate + H(+). The protein operates within protein modification; lipoprotein biosynthesis (diacylglyceryl transfer). Its function is as follows. Catalyzes the transfer of the diacylglyceryl group from phosphatidylglycerol to the sulfhydryl group of the N-terminal cysteine of a prolipoprotein, the first step in the formation of mature lipoproteins. The sequence is that of Phosphatidylglycerol--prolipoprotein diacylglyceryl transferase from Mycoplasma pneumoniae (strain ATCC 29342 / M129 / Subtype 1) (Mycoplasmoides pneumoniae).